A 148-amino-acid chain; its full sequence is MEKTFLMIKPDGVGRGLIGEIVKRIENKGIKVVGAKLMTVSEDLAKTHYGEHSEKPFFGELVEFITSGPVFAMVLEGDNVVEIGRTLVGKTNPAESAPGTIRGDFGMTVGKNIIHGSDSVASADKEIALWFKEEEILSYDLVTSAWVY.

Residues lysine 9, phenylalanine 57, arginine 85, threonine 91, arginine 102, and asparagine 112 each contribute to the ATP site. The active-site Pros-phosphohistidine intermediate is the histidine 115.

The protein belongs to the NDK family. As to quaternary structure, homotetramer. It depends on Mg(2+) as a cofactor.

It localises to the cytoplasm. The catalysed reaction is a 2'-deoxyribonucleoside 5'-diphosphate + ATP = a 2'-deoxyribonucleoside 5'-triphosphate + ADP. The enzyme catalyses a ribonucleoside 5'-diphosphate + ATP = a ribonucleoside 5'-triphosphate + ADP. Functionally, major role in the synthesis of nucleoside triphosphates other than ATP. The ATP gamma phosphate is transferred to the NDP beta phosphate via a ping-pong mechanism, using a phosphorylated active-site intermediate. In Macrococcus caseolyticus (strain JCSC5402) (Macrococcoides caseolyticum), this protein is Nucleoside diphosphate kinase.